A 483-amino-acid polypeptide reads, in one-letter code: Altronate oxidoreductase (483 aa).

18 to 29 is an NAD(+) binding site; the sequence is IIQFGEGNFLRA.

The protein belongs to the mannitol dehydrogenase family. UxaB subfamily.

It catalyses the reaction D-altronate + NAD(+) = keto-D-tagaturonate + NADH + H(+). The protein operates within carbohydrate metabolism; pentose and glucuronate interconversion. The polypeptide is Altronate oxidoreductase (Escherichia coli O7:K1 (strain IAI39 / ExPEC)).